Consider the following 545-residue polypeptide: MKKNGCLLLFAYSLLSFSLTAATIDETYDESLFIKSFSSRYSYVSFAFEIGASTDSTHSSVFSESSFSLFPLSIARVMDECQVSELHIRATRGRWDYENWKESPDNGFYSGGLGFEVWAFMANDPSMKYWLKLTNQLSGLLCASLNYIDSSNTYQPQLSYPGSFSFSNNTQYFASLPQEDVCTENLSPLFKLLPCKRKAGIASLLDSHLFFDTDWHSFSIDVYPSENQSLASVKMGIIIQAVVDVERNGRRKGKTTFQPPSEYCHDEDMDSLHCLMSGYSTEHHTVDDLFHKVPKERCLLSSTFSDVFVSNGDKIDTFSLDEAANIQIPIQSTSDNHTVTVDRSLSNDGNHWGSLSSTIYNPSSSPRTIVYFEKFPWFVRVYLHTLTITLNGTRINTKDFIEKLYYQPLRDRKAGTMMEIQFSIPPHTNLIVHFNVEKTPLRLDEYPPDANRGYNLPPAIISVFDENNTKLCSLRTAALLMFIPTPDFSMPYNVIIFTSTVIALTFGGIFNLLTRRFVPQQSKFQNRQPSMLQRLKEKIFHKKRG.

Residues 1–22 (MKKNGCLLLFAYSLLSFSLTAA) form the signal peptide. Over 23-493 (TIDETYDESL…PTPDFSMPYN (471 aa)) the chain is Lumenal. N-linked (GlcNAc...) asparagine glycans are attached at residues Asn-168, Asn-227, Asn-336, Asn-391, and Asn-467. The chain crosses the membrane as a helical span at residues 494 to 514 (VIIFTSTVIALTFGGIFNLLT). The Cytoplasmic portion of the chain corresponds to 515-545 (RRFVPQQSKFQNRQPSMLQRLKEKIFHKKRG).

Belongs to the PIGT family. Forms a complex with PIG-S homolog, PIG-U homolog and GPI8. The disulfide bond between PIGK/GPI8 and PIGT is important for normal enzyme activity.

The protein localises to the endoplasmic reticulum membrane. The protein operates within glycolipid biosynthesis; glycosylphosphatidylinositol-anchor biosynthesis. Functionally, component of the GPI transamidase complex. Involved in transfer of GPI to proteins. The chain is GPI transamidase component PIG-T homolog (gpi16) from Schizosaccharomyces pombe (strain 972 / ATCC 24843) (Fission yeast).